Consider the following 66-residue polypeptide: Large ribosomal subunit protein bL33c (66 aa).

Belongs to the bacterial ribosomal protein bL33 family.

It is found in the plastid. The protein localises to the chloroplast. The chain is Large ribosomal subunit protein bL33c from Acorus calamus (Sweet flag).